We begin with the raw amino-acid sequence, 526 residues long: MRVLYFKHSFFRSLLKSNGLPQTLLVFLLIPCYLTVDFRAPPLIPDVPFLWAWNAPTESCFTRFNQPLDLGLFSLVGSPRKSATGQPVTIFYSDRLGLYPYIDDSQLIFNGGLPQLVSLKSHLEVAKTDILHYMPIDNVGLAVIDWEEWRPTWARNWKPKDIYRNKSIELVQQQNILLNFTEAVKWAKEEFEEAARHFMEETLRLGKSLRPNHLWGFYLFPDCYNNKFQVADYKGECPDIEKHRNDALFWIWEESTALYPSIYLKSSLKSSPQAALYVRNRVQEAIRVSKVKDPRNPLPIFVYFRIVFTDLTYQYLYEDDLVNTIGETIALGTSGMVMWGTLSLSQTMKSCLDLHDYLKTILNPYIINVTLAAKMCSQTLCQNQGVCSRKDWNSNDYLHLNPQNFQIHFVKHGKYEIRGNPTLENLLYFSQKFRCSCFAHLNCQERADIESVSTVSVCTLEDICINSLVISDKSELPKDWNRPYFVNSNQSDITSSATVSPCVPRKDVSGYLVVLSLYSQHLKYSL.

Positions 1–35 (MRVLYFKHSFFRSLLKSNGLPQTLLVFLLIPCYLT) are cleaved as a signal peptide. Disulfide bonds link Cys-60-Cys-351, Cys-223-Cys-237, Cys-376-Cys-387, Cys-381-Cys-435, and Cys-437-Cys-443. Glu-147 (proton donor) is an active-site residue. Asn-165 and Asn-179 each carry an N-linked (GlcNAc...) asparagine glycan.

It belongs to the glycosyl hydrolase 56 family. As to expression, expressed in testis, epididymal sperm and epididymides (at protein level). Expressed at highest levels in testis with lesser amounts in epididymal sperm.

The protein localises to the cell membrane. It localises to the cytoplasmic vesicle. The protein resides in the secretory vesicle. Its subcellular location is the acrosome membrane. It is found in the secreted. The catalysed reaction is Random hydrolysis of (1-&gt;4)-linkages between N-acetyl-beta-D-glucosamine and D-glucuronate residues in hyaluronate.. Catalyzes the hydrolysis of hyaluronan into smaller oligosaccharide fragments. Does not appear to be essential for fertilization. The protein is Hyaluronidase-5 of Mus musculus (Mouse).